We begin with the raw amino-acid sequence, 347 residues long: Ryncolin-2 (347 aa).

The first 19 residues, 1 to 19 (MKPWAAFHLIFLVASSLEG), serve as a signal peptide directing secretion. The interval 49–115 (LQSQPGIPGI…DKGDKGDKGD (67 aa)) is disordered. The Collagen-like domain maps to 57–114 (GIPGVPGINGSEGLKGDPGPQGLPGETGFDGIPGVAGPKGDKGDQGDKGDKGDKGDKG). A compositionally biased stretch (basic and acidic residues) spans 95–115 (KGDKGDQGDKGDKGDKGDKGD). The region spanning 121–341 (DCPPTDVEVR…YADMKIRPQQ (221 aa)) is the Fibrinogen C-terminal domain. 2 cysteine pairs are disulfide-bonded: C132-C160 and C284-C297.

The protein belongs to the ficolin lectin family. Veficolin subfamily. Post-translationally, hydroxylated, possibly at Pro-74 and Pro-94. Expressed by the venom duct.

It localises to the secreted. Its function is as follows. Initiates complement activation and/or interferes in platelet aggregation and/or blood coagulation. This is Ryncolin-2 from Cerberus rynchops (Dog-faced water snake).